The following is a 156-amino-acid chain: Cell division protein SepF (156 aa).

This sequence belongs to the SepF family. In terms of assembly, homodimer. Interacts with FtsZ.

It is found in the cytoplasm. Its function is as follows. Cell division protein that is part of the divisome complex and is recruited early to the Z-ring. Probably stimulates Z-ring formation, perhaps through the cross-linking of FtsZ protofilaments. Its function overlaps with FtsA. The sequence is that of Cell division protein SepF from Bacillus cytotoxicus (strain DSM 22905 / CIP 110041 / 391-98 / NVH 391-98).